We begin with the raw amino-acid sequence, 381 residues long: Dual specificity protein phosphatase 6 (381 aa).

Residues 30-148 (GNERLLLMDC…FQAEFALHCE (119 aa)) enclose the Rhodanese domain. Residues 176 to 203 (SSSDIESDLDRDPNSATDSDGSPLSNSQ) are disordered. Over residues 189–203 (NSATDSDGSPLSNSQ) the composition is skewed to polar residues. The region spanning 206-349 (FPVEILPFLY…LLDFERTLGL (144 aa)) is the Tyrosine-protein phosphatase domain. Cysteine 293 serves as the catalytic Phosphocysteine intermediate.

The protein belongs to the protein-tyrosine phosphatase family. Non-receptor class dual specificity subfamily. As to quaternary structure, interacts with MAPK1/ERK2. In terms of processing, ubiquitinated by the SCF(FBXO31) complex, leading to its proteasomal degradation.

It localises to the cytoplasm. The enzyme catalyses O-phospho-L-tyrosyl-[protein] + H2O = L-tyrosyl-[protein] + phosphate. The catalysed reaction is O-phospho-L-seryl-[protein] + H2O = L-seryl-[protein] + phosphate. It catalyses the reaction O-phospho-L-threonyl-[protein] + H2O = L-threonyl-[protein] + phosphate. Its function is as follows. Dual specificity protein phosphatase, which mediates dephosphorylation and inactivation of MAP kinases. Has a specificity for the ERK family. Plays an important role in alleviating acute postoperative pain. Necessary for the normal dephosphorylation of the long-lasting phosphorylated forms of spinal MAPK1/3 and MAP kinase p38 induced by peripheral surgery, which drives the resolution of acute postoperative allodynia. Also important for dephosphorylation of MAPK1/3 in local wound tissue, which further contributes to resolution of acute pain. The polypeptide is Dual specificity protein phosphatase 6 (Dusp6) (Mus musculus (Mouse)).